The following is a 115-amino-acid chain: Holo-[acyl-carrier-protein] synthase (115 aa).

Mg(2+) contacts are provided by Asp-8 and Glu-50.

It belongs to the P-Pant transferase superfamily. AcpS family. Requires Mg(2+) as cofactor.

Its subcellular location is the cytoplasm. It catalyses the reaction apo-[ACP] + CoA = holo-[ACP] + adenosine 3',5'-bisphosphate + H(+). Functionally, transfers the 4'-phosphopantetheine moiety from coenzyme A to a Ser of acyl-carrier-protein. The chain is Holo-[acyl-carrier-protein] synthase from Arthrobacter sp. (strain FB24).